A 348-amino-acid chain; its full sequence is Nicotinate-nucleotide--dimethylbenzimidazole phosphoribosyltransferase (348 aa).

Residue Glu316 is the Proton acceptor of the active site.

This sequence belongs to the CobT family.

It catalyses the reaction 5,6-dimethylbenzimidazole + nicotinate beta-D-ribonucleotide = alpha-ribazole 5'-phosphate + nicotinate + H(+). It participates in nucleoside biosynthesis; alpha-ribazole biosynthesis; alpha-ribazole from 5,6-dimethylbenzimidazole: step 1/2. Catalyzes the synthesis of alpha-ribazole-5'-phosphate from nicotinate mononucleotide (NAMN) and 5,6-dimethylbenzimidazole (DMB). The protein is Nicotinate-nucleotide--dimethylbenzimidazole phosphoribosyltransferase of Xanthomonas euvesicatoria pv. vesicatoria (strain 85-10) (Xanthomonas campestris pv. vesicatoria).